The primary structure comprises 193 residues: Peptidyl-tRNA hydrolase (193 aa).

Tyr18 contacts tRNA. Catalysis depends on His23, which acts as the Proton acceptor. Phe69, Asn71, and Asn117 together coordinate tRNA.

The protein belongs to the PTH family. Monomer.

The protein localises to the cytoplasm. It catalyses the reaction an N-acyl-L-alpha-aminoacyl-tRNA + H2O = an N-acyl-L-amino acid + a tRNA + H(+). Its function is as follows. Hydrolyzes ribosome-free peptidyl-tRNAs (with 1 or more amino acids incorporated), which drop off the ribosome during protein synthesis, or as a result of ribosome stalling. In terms of biological role, catalyzes the release of premature peptidyl moieties from peptidyl-tRNA molecules trapped in stalled 50S ribosomal subunits, and thus maintains levels of free tRNAs and 50S ribosomes. The chain is Peptidyl-tRNA hydrolase from Teredinibacter turnerae (strain ATCC 39867 / T7901).